Reading from the N-terminus, the 527-residue chain is Glutamate--cysteine ligase (527 aa).

The protein belongs to the glutamate--cysteine ligase type 1 family. Type 1 subfamily.

The enzyme catalyses L-cysteine + L-glutamate + ATP = gamma-L-glutamyl-L-cysteine + ADP + phosphate + H(+). It functions in the pathway sulfur metabolism; glutathione biosynthesis; glutathione from L-cysteine and L-glutamate: step 1/2. The chain is Glutamate--cysteine ligase from Bordetella parapertussis (strain 12822 / ATCC BAA-587 / NCTC 13253).